A 313-amino-acid polypeptide reads, in one-letter code: MIGQKTLYSFFSPSPARKRHAPSPEPAVQGTGVAGVPEESGDAAAIPAKKAPAGQEEPGTPPSSPLSAEQLDRIQRNKAAALLRLAARNVPVGFGESWKKHLSGEFGKPYFIKLMGFVAEERKHYTVYPPPHQVFTWTQMCDIKDVKVVILGQDPYHGPNQAHGLCFSVQRPVPPPPSLENIYKELSTDIEDFVHPGHGDLSGWAKQGVLLLNAVLTVRAHQANSHKERGWEQFTDAVVSWLNQNSNGLVFLLWGSYAQKKGSAIDRKRHHVLQTAHPSPLSVYRGFFGCRHFSKTNELLQKSGKKPIDWKEL.

Over residues 1–12 (MIGQKTLYSFFS) the composition is skewed to polar residues. The interval 1-25 (MIGQKTLYSFFSPSPARKRHAPSPE) is interaction with FAM72A. The segment at 1–29 (MIGQKTLYSFFSPSPARKRHAPSPEPAVQ) is mitochondrial localization signal. Residues 1 to 68 (MIGQKTLYSF…GTPPSSPLSA (68 aa)) form a disordered region. Phosphoserine occurs at positions 12 and 14. The Important for nuclear sorting signature appears at 17–19 (RKR). Ser-23 is modified (phosphoserine). A compositionally biased stretch (low complexity) spans 43-53 (AAAIPAKKAPA). Phosphothreonine is present on Thr-60. The residue at position 64 (Ser-64) is a Phosphoserine. The interaction with RPA2 stretch occupies residues 73 to 88 (RIQRNKAAALLRLAAR). Gln-153 provides a ligand contact to uracil. Asp-154 functions as the Proton acceptor in the catalytic mechanism. Position 157 (His-157) interacts with dsDNA. Phe-167 lines the uracil pocket. DsDNA is bound at residue Ser-178. Asn-213 contacts uracil. DsDNA-binding residues include Ser-256, His-277, Ser-279, Ser-282, and Arg-285. His-277 is a uracil binding site. Lys-295 is modified (N6-acetyllysine).

This sequence belongs to the uracil-DNA glycosylase (UDG) superfamily. UNG family. As to quaternary structure, monomer. In terms of assembly, interacts with RPA2 subunit of the RPA trimer; this interaction mediates UNG2 recruitment to RPA-coated single-stranded DNA at stalled replication forks. Interacts with PCNA; this interaction mediates UNG2 recruitment to S-phase replication foci. Interacts (via N-terminus) with FAM72A. (Microbial infection) Interacts with HIV-1 Vpr. Processed by mitochondrial serine or cysteine peptidases to yield a mature dominant form that lacks N-terminal 29 amino acid residues and another minor form that lacks N-terminal 77 amino acid residues. The catalytic activity of UNG1 delta29 is not product-inhibited by AP sites.

The protein localises to the mitochondrion. Its subcellular location is the nucleus. It carries out the reaction Hydrolyzes single-stranded DNA or mismatched double-stranded DNA and polynucleotides, releasing free uracil.. It catalyses the reaction a 2'-deoxyuridine in single-stranded DNA + H2O = a 2'-deoxyribose 5'-monophosphate in single-stranded DNA + uracil. The catalysed reaction is a 2'-deoxyuridine in double-stranded DNA + H2O = a 2'-deoxyribose 5'-monophosphate in double-stranded DNA + uracil. Uracil-DNA glycosylase that hydrolyzes the N-glycosidic bond between uracil and deoxyribose in single- and double-stranded DNA (ssDNA and dsDNA) to release a free uracil residue and form an abasic (apurinic/apyrimidinic; AP) site. Excises uracil residues arising as a result of misincorporation of dUMP residues by DNA polymerase during replication or due to spontaneous or enzymatic deamination of cytosine. Mediates error-free base excision repair (BER) of uracil at replication forks. According to the model, it is recruited by PCNA to S-phase replication forks to remove misincorporated uracil at U:A base mispairs in nascent DNA strands. Via trimeric RPA it is recruited to ssDNA stretches ahead of the polymerase to allow detection and excision of deaminated cytosines prior to replication. The resultant AP sites temporarily stall replication, allowing time to repair the lesion. Mediates mutagenic uracil processing involved in antibody affinity maturation. Processes AICDA-induced U:G base mispairs at variable immunoglobulin (Ig) regions leading to the generation of transversion mutations. Operates at switch sites of Ig constant regions where it mediates Ig isotype class switch recombination. Excises AICDA-induced uracil residues forming AP sites that are subsequently nicked by APEX1 endonuclease. The accumulation of staggered nicks in opposite strands results in double strand DNA breaks that are finally resolved via non-homologous end joining repair pathway. The protein is Uracil-DNA glycosylase of Homo sapiens (Human).